The primary structure comprises 105 residues: Large ribosomal subunit protein bL21 (105 aa).

This sequence belongs to the bacterial ribosomal protein bL21 family. Part of the 50S ribosomal subunit. Contacts protein L20.

Its function is as follows. This protein binds to 23S rRNA in the presence of protein L20. In Treponema pallidum (strain Nichols), this protein is Large ribosomal subunit protein bL21.